The primary structure comprises 601 residues: Elongation factor 4 (601 aa).

Residues 6 to 188 enclose the tr-type G domain; sequence KFTRNFSIIA…AICYLLPPPV (183 aa). GTP is bound by residues 18–23 and 135–138; these read DHGKST and NKID.

It belongs to the TRAFAC class translation factor GTPase superfamily. Classic translation factor GTPase family. LepA subfamily.

The protein resides in the cell inner membrane. The catalysed reaction is GTP + H2O = GDP + phosphate + H(+). Its function is as follows. Required for accurate and efficient protein synthesis under certain stress conditions. May act as a fidelity factor of the translation reaction, by catalyzing a one-codon backward translocation of tRNAs on improperly translocated ribosomes. Back-translocation proceeds from a post-translocation (POST) complex to a pre-translocation (PRE) complex, thus giving elongation factor G a second chance to translocate the tRNAs correctly. Binds to ribosomes in a GTP-dependent manner. This is Elongation factor 4 from Leptospira biflexa serovar Patoc (strain Patoc 1 / Ames).